The following is an 84-amino-acid chain: Delta-thalatoxin-Cad1a (84 aa).

The signal sequence occupies residues 1-19; that stretch reads MAYLKIVLVALMLVLAVSA. A propeptide spanning residues 20 to 33 is cleaved from the precursor; the sequence is MRRPDQQDQDISVA. 3 cysteine pairs are disulfide-bonded: cysteine 38/cysteine 78, cysteine 40/cysteine 68, and cysteine 61/cysteine 79.

The protein belongs to the sea anemone sodium channel inhibitory toxin family. Type II subfamily.

Its subcellular location is the secreted. It localises to the nematocyst. Binds specifically to the voltage-gated sodium channel (Nav) and delays its inactivation. This is Delta-thalatoxin-Cad1a from Cryptodendrum adhaesivum (Adhesive sea anemone).